A 441-amino-acid chain; its full sequence is Zinc finger and BTB domain-containing protein 8A (441 aa).

Residues 24-92 (CDCSILVEGK…VYSGKLSLTG (69 aa)) form the BTB domain. 2 stretches are compositionally biased toward polar residues: residues 143-170 (NGVERSSFYSGGWQEGSSSPRSHLSPEQ) and 178-196 (KSWNKYNYHPASQKNTQQP). A disordered region spans residues 143–251 (NGVERSSFYS…QSEEQAQIDA (109 aa)). A phosphoserine mark is found at serine 161 and serine 167. Glycyl lysine isopeptide (Lys-Gly) (interchain with G-Cter in SUMO2) cross-links involve residues lysine 178, lysine 182, lysine 191, and lysine 199. Residues 198-208 (AKHEPRKESIK) are compositionally biased toward basic and acidic residues. Positions 234 to 243 (SDSSSHVSQS) are enriched in low complexity. 2 consecutive C2H2-type zinc fingers follow at residues 282–304 (FKCPYCTHVVKRKADLKRHLRCH) and 310–333 (YPCQACGKRFSRLDHLSSHFRTIH). Residue lysine 437 forms a Glycyl lysine isopeptide (Lys-Gly) (interchain with G-Cter in SUMO2) linkage.

Its subcellular location is the nucleus. Functionally, may be involved in transcriptional regulation. The protein is Zinc finger and BTB domain-containing protein 8A (ZBTB8A) of Homo sapiens (Human).